The primary structure comprises 106 residues: RNA-binding protein Hfq (106 aa).

Residues 9-68 (DPYLNALRKERVPVSIYLVNGIKLQGQIESFDAFVILLRNNISQMVYKHAVSTIVPSRNI) form the Sm domain. Residues 78–106 (EDEAGEEISAEYTPNAEGQAEATADPLYD) are disordered.

The protein belongs to the Hfq family. As to quaternary structure, homohexamer.

RNA chaperone that binds small regulatory RNA (sRNAs) and mRNAs to facilitate mRNA translational regulation in response to envelope stress, environmental stress and changes in metabolite concentrations. Also binds with high specificity to tRNAs. The protein is RNA-binding protein Hfq of Dichelobacter nodosus (strain VCS1703A).